The chain runs to 367 residues: Leucine dehydrogenase (367 aa).

Residue Lys80 is part of the active site. Residue 180–186 (GVGNVAY) coordinates NAD(+).

This sequence belongs to the Glu/Leu/Phe/Val dehydrogenases family. As to quaternary structure, homohexamer.

The catalysed reaction is L-leucine + NAD(+) + H2O = 4-methyl-2-oxopentanoate + NH4(+) + NADH + H(+). It functions in the pathway amino-acid degradation; L-leucine degradation; 4-methyl-2-oxopentanoate from L-leucine (dehydrogenase route): step 1/1. In terms of biological role, catalyzes the reversible deamination of L-leucine to 4-methyl-2-oxopentanoate. The chain is Leucine dehydrogenase (ldh) from Geobacillus stearothermophilus (Bacillus stearothermophilus).